A 316-amino-acid polypeptide reads, in one-letter code: Metal tolerance protein 8 (316 aa).

At methionine 1–lysine 15 the chain is on the cytoplasmic side. A helical transmembrane segment spans residues isoleucine 16–methionine 36. Topologically, residues serine 37–aspartate 45 are vacuolar. A helical membrane pass occupies residues alanine 46–alanine 66. Topologically, residues arginine 67–arginine 80 are cytoplasmic. A helical transmembrane segment spans residues phenylalanine 81–valine 101. The Vacuolar segment spans residues leucine 102–threonine 116. The chain crosses the membrane as a helical span at residues serine 117–phenylalanine 137. Over histidine 138–glycine 176 the chain is Cytoplasmic. Positions glutamate 147 to asparagine 166 are disordered. The helical transmembrane segment at isoleucine 177–leucine 197 threads the bilayer. Residues isoleucine 198–glycine 202 are Vacuolar-facing. Residues tryptophan 203 to leucine 223 form a helical membrane-spanning segment. The Cytoplasmic portion of the chain corresponds to proline 224–arginine 316.

Belongs to the cation diffusion facilitator (CDF) transporter (TC 2.A.4) family. SLC30A subfamily.

The protein localises to the vacuole membrane. Involved in sequestration of excess metal in the cytoplasm into vacuoles to maintain metal homeostasis. The protein is Metal tolerance protein 8 (MTP8) of Oryza sativa subsp. japonica (Rice).